The following is a 499-amino-acid chain: Lysine--tRNA ligase (499 aa).

Mg(2+) is bound by residues glutamate 408 and glutamate 415.

This sequence belongs to the class-II aminoacyl-tRNA synthetase family. As to quaternary structure, homodimer. The cofactor is Mg(2+).

The protein resides in the cytoplasm. The catalysed reaction is tRNA(Lys) + L-lysine + ATP = L-lysyl-tRNA(Lys) + AMP + diphosphate. The polypeptide is Lysine--tRNA ligase (Bacillus mycoides (strain KBAB4) (Bacillus weihenstephanensis)).